Reading from the N-terminus, the 167-residue chain is Heme-degrading monooxygenase (167 aa).

The segment at 1–50 (MKKVFITTGTEHYLRQLMANYTGGNVTLLQNFSQSLLYQESTGEKLFQEG) is important for catalysis. Residues 67–154 (VVVFEYIHLR…NNTQSGFSHE (88 aa)) enclose the ABM domain.

The protein belongs to the antibiotic biosynthesis monooxygenase family. Monomer.

The protein resides in the cytoplasm. Catalyzes the degradation of heme to biliverdin in the presence of a suitable electron donor such as ascorbate, with the subsequent release of iron. Hardly any CO is released by the heme degradation reaction. Binds heme. Allows bacterial pathogens to use the host heme as an iron source. Release of iron from heme may play a crucial role in the pathogenicity of L.monocytogenes. The polypeptide is Heme-degrading monooxygenase (Listeria monocytogenes serovar 1/2a (strain ATCC BAA-679 / EGD-e)).